The sequence spans 469 residues: Diacetylchitobiose binding protein NgcE (469 aa).

Positions 1–37 (MTIRAGSLDRRTLLRGAIATAAMGSFAVACSSPSSED) form a signal peptide, tat-type signal. Positions 30-54 (CSSPSSEDKESDSGPKGEKSANNPF) are disordered. Basic and acidic residues predominate over residues 35–48 (SEDKESDSGPKGEK).

This sequence belongs to the bacterial solute-binding protein 1 family. The complex is composed of two ATP-binding proteins (MsiK), two transmembrane proteins (NgcF and NgcG) and a solute-binding protein (NgcE). In terms of processing, predicted to be exported by the Tat system. The position of the signal peptide cleavage has not been experimentally proven.

The protein localises to the cell membrane. Part of the ABC transporter complex NgcEFG-MsiK involved in N,N'-diacetylchitobiose ((GlcNAc)2) uptake. Binds (GlcNAc)2. Can also bind GlcNAc. This Streptomyces coelicolor (strain ATCC BAA-471 / A3(2) / M145) protein is Diacetylchitobiose binding protein NgcE.